Here is a 619-residue protein sequence, read N- to C-terminus: Guanylate cyclase soluble subunit beta-1 (619 aa).

A heme-binding site is contributed by H105. The Guanylate cyclase domain maps to 421–554 (TILFSGIVGF…NTVNLTSRTE (134 aa)).

This sequence belongs to the adenylyl cyclase class-4/guanylyl cyclase family. The active enzyme is formed by a heterodimer of an alpha and a beta subunit. Homotetramer; dimer of dimers (in vitro). Heterodimer with GUCY1A1. Can also form inactive homodimers in vitro. Requires heme as cofactor. As to expression, lung and brain.

It localises to the cytoplasm. It catalyses the reaction GTP = 3',5'-cyclic GMP + diphosphate. With respect to regulation, activated by nitric oxide in the presence of magnesium or manganese ions. Mediates responses to nitric oxide (NO) by catalyzing the biosynthesis of the signaling molecule cGMP. This is Guanylate cyclase soluble subunit beta-1 (Gucy1b1) from Rattus norvegicus (Rat).